The primary structure comprises 90 residues: Cell division topological specificity factor (90 aa).

This sequence belongs to the MinE family.

Prevents the cell division inhibition by proteins MinC and MinD at internal division sites while permitting inhibition at polar sites. This ensures cell division at the proper site by restricting the formation of a division septum at the midpoint of the long axis of the cell. The polypeptide is Cell division topological specificity factor (Francisella philomiragia subsp. philomiragia (strain ATCC 25017 / CCUG 19701 / FSC 153 / O#319-036)).